The primary structure comprises 366 residues: Patr class I histocompatibility antigen, C alpha chain (366 aa).

Positions 1-24 (MRVTAPRTLLLLLSGGLALTETWA) are cleaved as a signal peptide. The tract at residues 25-114 (GSHSLRYFDT…LRGYYNQSED (90 aa)) is alpha-1. Residues 25 to 308 (GSHSLRYFDT…KPTSQPTIPI (284 aa)) lie on the Extracellular side of the membrane. N110 carries an N-linked (GlcNAc...) asparagine glycan. An alpha-2 region spans residues 115–206 (GSHTLQWMYG…ENGKETLQRT (92 aa)). 2 cysteine pairs are disulfide-bonded: C125–C192 and C227–C283. Positions 207–298 (ECPKTHMTHH…GLPEPLTLRW (92 aa)) are alpha-3. In terms of domain architecture, Ig-like C1-type spans 209-297 (PKTHMTHHPV…EGLPEPLTLR (89 aa)). The connecting peptide stretch occupies residues 299–308 (KPTSQPTIPI). Residues 309–332 (VGIVAGLAVLAVLAVLGAVVTAMM) traverse the membrane as a helical segment. Residues 333–366 (CRRKSSGGKGGSCSQAACSNSAQGSDESLIACKA) are Cytoplasmic-facing. A phosphoserine mark is found at S357 and S360.

It belongs to the MHC class I family. Heterodimer of an alpha chain and a beta chain (beta-2-microglobulin).

The protein localises to the membrane. In terms of biological role, involved in the presentation of foreign antigens to the immune system. The sequence is that of Patr class I histocompatibility antigen, C alpha chain from Pan troglodytes (Chimpanzee).